We begin with the raw amino-acid sequence, 480 residues long: Glycogen synthase (480 aa).

Position 15 (lysine 15) interacts with ADP-alpha-D-glucose.

The protein belongs to the glycosyltransferase 1 family. Bacterial/plant glycogen synthase subfamily.

The catalysed reaction is [(1-&gt;4)-alpha-D-glucosyl](n) + ADP-alpha-D-glucose = [(1-&gt;4)-alpha-D-glucosyl](n+1) + ADP + H(+). It functions in the pathway glycan biosynthesis; glycogen biosynthesis. Its function is as follows. Synthesizes alpha-1,4-glucan chains using ADP-glucose. The sequence is that of Glycogen synthase from Desulforamulus reducens (strain ATCC BAA-1160 / DSM 100696 / MI-1) (Desulfotomaculum reducens).